A 118-amino-acid polypeptide reads, in one-letter code: Urease subunit beta (118 aa).

Belongs to the urease beta subunit family. As to quaternary structure, heterotrimer of UreA (gamma), UreB (beta) and UreC (alpha) subunits. Three heterotrimers associate to form the active enzyme.

The protein localises to the cytoplasm. It catalyses the reaction urea + 2 H2O + H(+) = hydrogencarbonate + 2 NH4(+). Its pathway is nitrogen metabolism; urea degradation; CO(2) and NH(3) from urea (urease route): step 1/1. The protein is Urease subunit beta of Aliivibrio fischeri (strain MJ11) (Vibrio fischeri).